We begin with the raw amino-acid sequence, 304 residues long: Acetyl-coenzyme A carboxylase carboxyl transferase subunit beta (304 aa).

Residues 25-294 form the CoA carboxyltransferase N-terminal domain; sequence VWTKCDSCGQ…PSVVESKADT (270 aa). 4 residues coordinate Zn(2+): C29, C32, C48, and C51. The segment at 29–51 adopts a C4-type zinc-finger fold; that stretch reads CDSCGQVLYRAELERNLEVCPKC.

This sequence belongs to the AccD/PCCB family. As to quaternary structure, acetyl-CoA carboxylase is a heterohexamer composed of biotin carboxyl carrier protein (AccB), biotin carboxylase (AccC) and two subunits each of ACCase subunit alpha (AccA) and ACCase subunit beta (AccD). Zn(2+) serves as cofactor.

Its subcellular location is the cytoplasm. It carries out the reaction N(6)-carboxybiotinyl-L-lysyl-[protein] + acetyl-CoA = N(6)-biotinyl-L-lysyl-[protein] + malonyl-CoA. The protein operates within lipid metabolism; malonyl-CoA biosynthesis; malonyl-CoA from acetyl-CoA: step 1/1. Component of the acetyl coenzyme A carboxylase (ACC) complex. Biotin carboxylase (BC) catalyzes the carboxylation of biotin on its carrier protein (BCCP) and then the CO(2) group is transferred by the transcarboxylase to acetyl-CoA to form malonyl-CoA. The sequence is that of Acetyl-coenzyme A carboxylase carboxyl transferase subunit beta from Yersinia pestis bv. Antiqua (strain Nepal516).